The primary structure comprises 342 residues: uncharacterized protein (342 aa).

The next 10 helical transmembrane spans lie at 8-28, 39-59, 79-99, 108-128, 142-162, 175-195, 207-227, 242-262, 276-296, and 304-324; these read FESSWFAAVMGTGVLAVTSLF, ISFLLFYFNILLFFVFLMLWI, SSFSPTVAVAMLVLGIDFILI, IFWVFGAIGMFLFSLIVPFYM, GWYIPPVGLIVIPIAGSLIMP, INYFGWGAGFFLYLALLAVVI, AMAPTVWINLGPIGAGIVALI, FYIFSFIFWGFGLWWSLMAII, AMSWWAFIFPLGVYIASTHLV, and IVDYIGFGLYWLLFFFWIVTL.

This sequence belongs to the tellurite-resistance/dicarboxylate transporter (TDT) family.

Its subcellular location is the cell membrane. This is an uncharacterized protein from Methanocaldococcus jannaschii (strain ATCC 43067 / DSM 2661 / JAL-1 / JCM 10045 / NBRC 100440) (Methanococcus jannaschii).